The following is a 364-amino-acid chain: Esculetin O-methyltransferase (364 aa).

Position 132 (asparagine 132) interacts with bergaptol. S-adenosyl-L-homocysteine is bound by residues glycine 209, aspartate 232, aspartate 252, methionine 253, methionine 265, and lysine 266. A bergaptol-binding site is contributed by histidine 270. Histidine 270 acts as the Proton acceptor in catalysis.

The protein belongs to the class I-like SAM-binding methyltransferase superfamily. Cation-independent O-methyltransferase family. COMT subfamily. As to quaternary structure, homodimer. In terms of tissue distribution, expressed ubiquitously.

It carries out the reaction bergaptol + S-adenosyl-L-methionine = bergapten + S-adenosyl-L-homocysteine. The catalysed reaction is xanthotoxol + S-adenosyl-L-methionine = xanthotoxin + S-adenosyl-L-homocysteine + H(+). It catalyses the reaction esculetin + S-adenosyl-L-methionine = isoscopoletin + S-adenosyl-L-homocysteine + H(+). The enzyme catalyses esculetin + S-adenosyl-L-methionine = scopoletin + S-adenosyl-L-homocysteine + H(+). It functions in the pathway aromatic compound metabolism. It participates in secondary metabolite biosynthesis. Inhibited by zinc Zn(2+), copper Cu(2+) and silver Ag(+) ions. O-methyltransferase involved in the biosynthesis of methoxylated coumarins natural products such as isoscopoletin, scopoletin, xanthotoxin and bergapten, photosensitizers used for medical purpose such as treating psoriasis and vitiligo or facilitating resistance to microbial infection and other stresses. Catalyzes the methylation of esculetin, bergaptol and xanthotoxol, but seems inactive on scopoletin and isoscopoletin. The sequence is that of Esculetin O-methyltransferase from Kitagawia praeruptora (Peucedanum praeruptorum).